A 99-amino-acid chain; its full sequence is PE family immunomodulator PE35 (99 aa).

Positions 1–90 (MEKMSHDPIA…DVARTYSQID (90 aa)) constitute a PE domain.

This sequence belongs to the mycobacterial PE family. In terms of assembly, interacts with PPE68. PE35/PPE68 complex interacts with human TLR2.

The protein localises to the secreted. It is found in the cell surface. Functionally, plays a major role in RD1-associated pathogenesis, and may contribute to the establishment and maintenance of M.tuberculosis infection. Together with PPE68, stimulates the secretion of IL-10 and MCP-1 from human macrophages, via the interaction with human Toll-like receptor 2 (TLR2). The protein is PE family immunomodulator PE35 (PE35) of Mycobacterium tuberculosis (strain ATCC 25618 / H37Rv).